A 229-amino-acid chain; its full sequence is V-type proton ATPase subunit E (229 aa).

The protein belongs to the V-ATPase E subunit family. As to quaternary structure, V-ATPase is a heteromultimeric enzyme composed of a peripheral catalytic V1 complex (components A to H) attached to an integral membrane V0 proton pore complex (components: a, c, c', c'' and d).

Its function is as follows. Subunit of the peripheral V1 complex of vacuolar ATPase essential for assembly or catalytic function. V-ATPase is responsible for acidifying a variety of intracellular compartments in eukaryotic cells. The polypeptide is V-type proton ATPase subunit E (VATE) (Spinacia oleracea (Spinach)).